Consider the following 410-residue polypeptide: Phosphoglycerate kinase (410 aa).

Substrate contacts are provided by residues 24-26 (DLN), Arg-40, 63-66 (HLGR), Arg-122, and Arg-162. Residues Lys-212, Gly-300, Glu-331, and 360–363 (GGDS) each bind ATP.

Belongs to the phosphoglycerate kinase family. As to quaternary structure, monomer.

It is found in the cytoplasm. It catalyses the reaction (2R)-3-phosphoglycerate + ATP = (2R)-3-phospho-glyceroyl phosphate + ADP. It participates in carbohydrate degradation; glycolysis; pyruvate from D-glyceraldehyde 3-phosphate: step 2/5. The chain is Phosphoglycerate kinase from Nocardia farcinica (strain IFM 10152).